Consider the following 710-residue polypeptide: Probable GTP diphosphokinase RSH2, chloroplastic (710 aa).

The N-terminal 63 residues, 1–63, are a transit peptide targeting the chloroplast; it reads MVVATTIALY…SSLFSSASVK (63 aa). The HD domain occupies 233 to 337; sequence YLQHCVETAM…IKLADRLHNM (105 aa).

Belongs to the RelA/SpoT family.

It is found in the plastid. The protein localises to the chloroplast. The catalysed reaction is GTP + ATP = guanosine 3'-diphosphate 5'-triphosphate + AMP. Its function is as follows. Probable ppGpp (guanosine 3'-diphosphate 5'-diphosphate) synthetase that may be involved in a rapid plant ppGpp-mediated response to pathogens and other stresses. This Arabidopsis thaliana (Mouse-ear cress) protein is Probable GTP diphosphokinase RSH2, chloroplastic (RSH2).